The primary structure comprises 239 residues: Ribonuclease PH (239 aa).

Residues Arg87 and 125-127 contribute to the phosphate site; that span reads GTR.

The protein belongs to the RNase PH family. In terms of assembly, homohexameric ring arranged as a trimer of dimers.

The enzyme catalyses tRNA(n+1) + phosphate = tRNA(n) + a ribonucleoside 5'-diphosphate. Phosphorolytic 3'-5' exoribonuclease that plays an important role in tRNA 3'-end maturation. Removes nucleotide residues following the 3'-CCA terminus of tRNAs; can also add nucleotides to the ends of RNA molecules by using nucleoside diphosphates as substrates, but this may not be physiologically important. Probably plays a role in initiation of 16S rRNA degradation (leading to ribosome degradation) during starvation. This Syntrophomonas wolfei subsp. wolfei (strain DSM 2245B / Goettingen) protein is Ribonuclease PH.